We begin with the raw amino-acid sequence, 394 residues long: Elongation factor Tu 1 (394 aa).

The tr-type G domain occupies 10–204 (KPHVNVGTIG…ALDTYIPEPA (195 aa)). Residues 19-26 (GHVDHGKT) are G1. 19-26 (GHVDHGKT) contacts GTP. Residue T26 coordinates Mg(2+). The tract at residues 60-64 (GITIN) is G2. Residues 81–84 (DCPG) are G3. GTP contacts are provided by residues 81–85 (DCPGH) and 136–139 (NKCD). A G4 region spans residues 136 to 139 (NKCD). The G5 stretch occupies residues 174–176 (SAL).

The protein belongs to the TRAFAC class translation factor GTPase superfamily. Classic translation factor GTPase family. EF-Tu/EF-1A subfamily. Monomer.

Its subcellular location is the cytoplasm. It carries out the reaction GTP + H2O = GDP + phosphate + H(+). In terms of biological role, GTP hydrolase that promotes the GTP-dependent binding of aminoacyl-tRNA to the A-site of ribosomes during protein biosynthesis. This is Elongation factor Tu 1 from Shewanella frigidimarina (strain NCIMB 400).